Here is a 282-residue protein sequence, read N- to C-terminus: RsbT co-antagonist protein RsbRC (282 aa).

Phosphoserine is present on residues Ser-165 and Ser-174. The STAS domain maps to 165–276 (SAPVIVLFHS…STLASAIASD (112 aa)). Thr-186 is subject to Phosphothreonine.

As to quaternary structure, probably present in the stressosome with RsbRA, RsbRB, RsbRD and RsbS. Phosphorylated by RsbT.

In terms of biological role, one of 4 functionally non-identical RsbR paralogs, it functions in the environmental signaling branch of the general stress response. Negative regulator of sigma-B activity. Non-phosphorylated RsbS binds to RsbT, preventing its association with RsbU. Requires any one of RsbRA, RsbRB, RsbRC or RsbRD to sequester RsbT. When RsbS and the RsbR paralog(s) are phosphorylated, they release RsbT, which can then bind and activate RsbU. This chain is RsbT co-antagonist protein RsbRC (rsbRC), found in Bacillus subtilis (strain 168).